The following is a 473-amino-acid chain: 3-isopropylmalate dehydratase large subunit 2 (473 aa).

[4Fe-4S] cluster is bound by residues cysteine 350, cysteine 410, and cysteine 413.

Belongs to the aconitase/IPM isomerase family. LeuC type 1 subfamily. As to quaternary structure, heterodimer of LeuC and LeuD. It depends on [4Fe-4S] cluster as a cofactor.

It carries out the reaction (2R,3S)-3-isopropylmalate = (2S)-2-isopropylmalate. The protein operates within amino-acid biosynthesis; L-leucine biosynthesis; L-leucine from 3-methyl-2-oxobutanoate: step 2/4. Catalyzes the isomerization between 2-isopropylmalate and 3-isopropylmalate, via the formation of 2-isopropylmaleate. This is 3-isopropylmalate dehydratase large subunit 2 from Salmonella choleraesuis (strain SC-B67).